Consider the following 446-residue polypeptide: Tubulin gamma chain (446 aa).

GTP is bound at residue 142–148 (AGGTGSG).

It belongs to the tubulin family. Interacts with mto1. Interacts with mto2.

The protein resides in the cytoplasm. It localises to the cytoskeleton. Its subcellular location is the microtubule organizing center. The protein localises to the spindle pole body. Tubulin is the major constituent of microtubules. The gamma chain is found at microtubule organizing centers (MTOC) such as the spindle poles or the centrosome, suggesting that it is involved in the minus-end nucleation of microtubule assembly. The chain is Tubulin gamma chain from Schizosaccharomyces pombe (strain 972 / ATCC 24843) (Fission yeast).